The sequence spans 305 residues: MAQVKRIRRNVSGIILLDKPLGFTSNAALQKVRWLLNAEKAGHTGSLDPLATGVLPLCFGEATKFSQYLLDSDKSYETLAQLGKTTTTADSEGEVLLTRPVTVGRDDIEAALPHFRGQISQIPPMYSALKRDGQPLYKLARAGEVVEREPRSVTIARLELLACEGDTARLSVDCSKGTYIRTLVEDIGEKLGCGAYVAELRRTQAGPFTLAQTVTLEELEQVHADGGNEAVDRFLMPSDSGLLDWPLLKFSEHSSFYWLHGQPVRAPDAPKFGMVRVQDHEGRFIGIGEVAEDGRIAPRRLIRSE.

The active-site Nucleophile is the D48.

Belongs to the pseudouridine synthase TruB family. Type 1 subfamily.

The catalysed reaction is uridine(55) in tRNA = pseudouridine(55) in tRNA. In terms of biological role, responsible for synthesis of pseudouridine from uracil-55 in the psi GC loop of transfer RNAs. In Pseudomonas syringae pv. syringae (strain B728a), this protein is tRNA pseudouridine synthase B.